The chain runs to 298 residues: Probable 2-(5''-triphosphoribosyl)-3'-dephosphocoenzyme-A synthase 2 (298 aa).

The protein belongs to the CitG/MdcB family.

The enzyme catalyses 3'-dephospho-CoA + ATP = 2'-(5''-triphospho-alpha-D-ribosyl)-3'-dephospho-CoA + adenine. The sequence is that of Probable 2-(5''-triphosphoribosyl)-3'-dephosphocoenzyme-A synthase 2 from Salmonella typhi.